Reading from the N-terminus, the 56-residue chain is Small ribosomal subunit protein uS14 (56 aa).

The residue at position 9 (serine 9) is a Phosphoserine. The residue at position 12 (arginine 12) is an Omega-N-methylarginine. Cysteine 21, cysteine 24, cysteine 39, and cysteine 42 together coordinate Zn(2+). Lysine 48 carries the N6-acetyllysine modification.

Belongs to the universal ribosomal protein uS14 family. Component of the 40S small ribosomal subunit. Zn(2+) is required as a cofactor.

Its subcellular location is the cytoplasm. It localises to the cytosol. It is found in the rough endoplasmic reticulum. In terms of biological role, component of the small ribosomal subunit. The ribosome is a large ribonucleoprotein complex responsible for the synthesis of proteins in the cell. The chain is Small ribosomal subunit protein uS14 (RPS29) from Sus scrofa (Pig).